Here is a 743-residue protein sequence, read N- to C-terminus: Inhibitor of nuclear factor kappa-B kinase subunit alpha (743 aa).

The region spanning 15-300 (WDMKDRLGTG…MDCGRPQCFV (286 aa)) is the Protein kinase domain. ATP-binding positions include 21–29 (LGTGGFGNV) and Lys44. Asp144 acts as the Proton acceptor in catalysis. Positions 453–474 (LLRFNTNLTKMKNTMVSASQQL) are leucine-zipper. The segment at 736-741 (LDFSWL) is NEMO-binding.

Belongs to the protein kinase superfamily. Ser/Thr protein kinase family. I-kappa-B kinase subfamily.

It is found in the cytoplasm. The protein resides in the nucleus. It catalyses the reaction L-seryl-[I-kappa-B protein] + ATP = O-phospho-L-seryl-[I-kappa-B protein] + ADP + H(+). Activated when phosphorylated and inactivated when dephosphorylated. Its function is as follows. Phosphorylates inhibitors of NF-kappa-B thus leading to the dissociation of the inhibitor/NF-kappa-B complex and ultimately the degradation of the inhibitor. Phosphorylates 'Ser-10' of histone H3 at NF-kappa-B-regulated promoters during inflammatory responses triggered by cytokines. In Xenopus tropicalis (Western clawed frog), this protein is Inhibitor of nuclear factor kappa-B kinase subunit alpha (chuk).